The chain runs to 122 residues: Thioredoxin H-type (122 aa).

The 117-residue stretch at 2 to 118 (AAEEGVVIAC…IVKHVGATAA (117 aa)) folds into the Thioredoxin domain. The cysteines at positions 40 and 43 are disulfide-linked.

It localises to the cytoplasm. In terms of biological role, participates in various redox reactions through the reversible oxidation of the active center dithiol to a disulfide. The H form is known to activate a number of cytosolic enzymes. The chain is Thioredoxin H-type (TRXH) from Oryza sativa subsp. indica (Rice).